We begin with the raw amino-acid sequence, 220 residues long: uncharacterized protein (220 aa).

A disordered region spans residues 196-220 (KDDNSKDDNNDSEDLSKQIDNLKLD).

This is an uncharacterized protein from Invertebrate iridescent virus 6 (IIV-6).